The sequence spans 226 residues: Neuromodulin (226 aa).

Positions 1 to 226 (MLCCMRRTKQ…EDPEADQEHA (226 aa)) are disordered. Residues Cys-3 and Cys-4 are each lipidated (S-palmitoyl cysteine). Positions 9–32 (KQVEKNDEDQKIEQDGVKPEDKAH) are enriched in basic and acidic residues. In terms of domain architecture, IQ spans 31–60 (AHKAATKIQASFRGHITRKKLKDEKKGDAP). Ser-41 carries the phosphoserine; by PHK and PKC modification. Over residues 51 to 84 (LKDEKKGDAPAAEAEAKEKDDAPVADGVEKKEGD) the composition is skewed to basic and acidic residues. Low complexity predominate over residues 85–97 (GSATTDAAPATSP). Residues Ser-86 and Ser-96 each carry the phosphoserine modification. Basic and acidic residues predominate over residues 98–127 (KAEEPSKAGDAPSEEKKGEGDAAPSEEKAG). Over residues 128-139 (SAETESAAKATT) the composition is skewed to low complexity. Residues Ser-142, Ser-144, and Ser-145 each carry the phosphoserine modification. Residues 146–158 (KAEDGPAKEEPKQ) are compositionally biased toward basic and acidic residues. Positions 159–192 (ADVPAAVTDAAATTPAAEDAAKAAQPPTETAESS) are enriched in low complexity. A Phosphothreonine modification is found at Thr-172. Ser-191 and Ser-192 each carry phosphoserine. Residues 201–214 (VDEAKPKESARQDE) show a composition bias toward basic and acidic residues. Over residues 215 to 226 (GKEDPEADQEHA) the composition is skewed to acidic residues.

It belongs to the neuromodulin family. Identified in a complex containing FGFR4, NCAM1, CDH2, PLCG1, FRS2, SRC, SHC1, GAP43 and CTTN. Interacts (via IQ domain) with calmodulin. Binds calmodulin with a greater affinity in the absence of Ca(2+) than in its presence. Post-translationally, phosphorylated. Phosphorylation of this protein by a protein kinase C is specifically correlated with certain forms of synaptic plasticity. In terms of processing, palmitoylated by ZDHHC3. Palmitoylation is regulated by ARF6 and is essential for plasma membrane association and axonal and dendritic filopodia induction. Deacylated by LYPLA2. As to expression, expressed in hippocampal neurons, with highest levels of expression in the CA4 and CA3 neurons and lower levels in CA1 neurons. Expressed in the dorsal root ganglion.

It is found in the cell membrane. The protein localises to the cell projection. Its subcellular location is the growth cone. It localises to the growth cone membrane. The protein resides in the synapse. It is found in the filopodium membrane. The protein localises to the perikaryon. Its subcellular location is the dendrite. It localises to the axon. The protein resides in the cytoplasm. Its function is as follows. This protein is associated with nerve growth. It is a major component of the motile 'growth cones' that form the tips of elongating axons. Plays a role in axonal and dendritic filopodia induction. In Rattus norvegicus (Rat), this protein is Neuromodulin (Gap43).